A 135-amino-acid polypeptide reads, in one-letter code: Small ribosomal subunit protein uS11 (135 aa).

Belongs to the universal ribosomal protein uS11 family. Part of the 30S ribosomal subunit. Interacts with proteins S7 and S18. Binds to IF-3.

Functionally, located on the platform of the 30S subunit, it bridges several disparate RNA helices of the 16S rRNA. Forms part of the Shine-Dalgarno cleft in the 70S ribosome. This is Small ribosomal subunit protein uS11 from Corynebacterium urealyticum (strain ATCC 43042 / DSM 7109).